The primary structure comprises 453 residues: Homogentisate 1,2-dioxygenase (453 aa).

Residues 1–42 (MLEKAEKQRRAGSGQQRAAGYMPGFGNDFETESLPGALPQGQ) form a disordered region. His-306 functions as the Proton acceptor in the catalytic mechanism. Positions 349 and 355 each coordinate Fe cation. 2 residues coordinate homogentisate: Tyr-364 and His-385. His-385 provides a ligand contact to Fe cation.

The protein belongs to the homogentisate dioxygenase family. Hexamer; dimer of trimers. The cofactor is Fe cation.

The enzyme catalyses homogentisate + O2 = 4-maleylacetoacetate + H(+). Its pathway is amino-acid degradation; L-phenylalanine degradation; acetoacetate and fumarate from L-phenylalanine: step 4/6. Involved in the catabolism of homogentisate (2,5-dihydroxyphenylacetate or 2,5-OH-PhAc), a central intermediate in the degradation of phenylalanine and tyrosine. Catalyzes the oxidative ring cleavage of the aromatic ring of homogentisate to yield maleylacetoacetate. The chain is Homogentisate 1,2-dioxygenase from Rhizobium meliloti (strain 1021) (Ensifer meliloti).